A 390-amino-acid chain; its full sequence is Aspergillopepsin-1 (390 aa).

A signal peptide spans 1–19 (MVNTSLLAALTAYAVAVAA). Positions 20 to 67 (APTAPQVKGFSVNQVAVPKGVYRHPAAQLAKAYGKYHATVPTQVAAAA) are cleaved as a propeptide — activation peptide. Residues 84–387 (YITQVTVGDD…DASGPRLGFA (304 aa)) enclose the Peptidase A1 domain. Catalysis depends on residues Asp100 and Asp281.

It belongs to the peptidase A1 family. As to quaternary structure, monomer.

It is found in the secreted. The enzyme catalyses Hydrolysis of proteins with broad specificity. Generally favors hydrophobic residues in P1 and P1', but also accepts Lys in P1, which leads to activation of trypsinogen. Does not clot milk.. Its activity is regulated as follows. Inhibited by the microbial peptide pepstatin A. Functionally, secreted aspartic endopeptidase that allows assimilation of proteinaceous substrates. The scissile peptide bond is attacked by a nucleophilic water molecule activated by two aspartic residues in the active site. Shows a broad primary substrate specificity. Favors hydrophobic residues at the P1 and P1' positions, but also accepts a lysine residue in the P1 position, leading to the activation of trypsinogen and chymotrypsinogen A. Hydrolyzes myoglobin, hemoglobin and other natural proteins. Hydrolyzes equine myoglobin between positions 'Met-1' and 'Gly-2', 'Lys-43' and 'Phe-44', and 'Leu-70' and 'Thr-71'. This chain is Aspergillopepsin-1 (pepA), found in Aspergillus pseudoglaucus (Eurotium repens).